A 226-amino-acid polypeptide reads, in one-letter code: ATP synthase F(0) complex subunit a (226 aa).

6 consecutive transmembrane segments (helical) span residues 6 to 26 (FASFIAPTMMGLPIVTLIIMF), 68 to 88 (WSLMLMSLIMFIGSTNILGLL), 97 to 117 (QLSMNLGMAIPLWSATVFTGF), 136 to 156 (LLIPMLVIIETISLFIQPVAL), 164 to 184 (ITAGHLLIHLIGGATLALLNI), and 189 to 209 (AFITFTILILLTILEFAVALI).

This sequence belongs to the ATPase A chain family. Component of the ATP synthase complex composed at least of ATP5F1A/subunit alpha, ATP5F1B/subunit beta, ATP5MC1/subunit c (homooctomer), MT-ATP6/subunit a, MT-ATP8/subunit 8, ATP5ME/subunit e, ATP5MF/subunit f, ATP5MG/subunit g, ATP5MK/subunit k, ATP5MJ/subunit j, ATP5F1C/subunit gamma, ATP5F1D/subunit delta, ATP5F1E/subunit epsilon, ATP5PF/subunit F6, ATP5PB/subunit b, ATP5PD/subunit d, ATP5PO/subunit OSCP. ATP synthase complex consists of a soluble F(1) head domain (subunits alpha(3) and beta(3)) - the catalytic core - and a membrane F(0) domain - the membrane proton channel (subunits c, a, 8, e, f, g, k and j). These two domains are linked by a central stalk (subunits gamma, delta, and epsilon) rotating inside the F1 region and a stationary peripheral stalk (subunits F6, b, d, and OSCP). Interacts with DNAJC30; interaction is direct.

Its subcellular location is the mitochondrion inner membrane. It carries out the reaction H(+)(in) = H(+)(out). Its function is as follows. Subunit a, of the mitochondrial membrane ATP synthase complex (F(1)F(0) ATP synthase or Complex V) that produces ATP from ADP in the presence of a proton gradient across the membrane which is generated by electron transport complexes of the respiratory chain. ATP synthase complex consist of a soluble F(1) head domain - the catalytic core - and a membrane F(1) domain - the membrane proton channel. These two domains are linked by a central stalk rotating inside the F(1) region and a stationary peripheral stalk. During catalysis, ATP synthesis in the catalytic domain of F(1) is coupled via a rotary mechanism of the central stalk subunits to proton translocation. With the subunit c (ATP5MC1), forms the proton-conducting channel in the F(0) domain, that contains two crucial half-channels (inlet and outlet) that facilitate proton movement from the mitochondrial intermembrane space (IMS) into the matrix. Protons are taken up via the inlet half-channel and released through the outlet half-channel, following a Grotthuss mechanism. This chain is ATP synthase F(0) complex subunit a, found in Sus scrofa (Pig).